A 710-amino-acid polypeptide reads, in one-letter code: Polyribonucleotide nucleotidyltransferase (710 aa).

Residues Asp-489 and Asp-495 each contribute to the Mg(2+) site. The KH domain occupies 556-615; it reads PKIDTIKIDVDKIKVVIGKGGETIDKIIAETGVKIDIDDEGNVSIYSSDQAAINRTKEII. One can recognise an S1 motif domain in the interval 625–693; the sequence is GEVYHAKVVR…EKGRVDASMK (69 aa). Positions 691 to 710 are disordered; sequence SMKALIPRPPKPEKKEEKHD. The span at 700-710 shows a compositional bias: basic and acidic residues; the sequence is PKPEKKEEKHD.

It belongs to the polyribonucleotide nucleotidyltransferase family. It depends on Mg(2+) as a cofactor.

Its subcellular location is the cytoplasm. It catalyses the reaction RNA(n+1) + phosphate = RNA(n) + a ribonucleoside 5'-diphosphate. Its function is as follows. Involved in mRNA degradation. Catalyzes the phosphorolysis of single-stranded polyribonucleotides processively in the 3'- to 5'-direction. The chain is Polyribonucleotide nucleotidyltransferase from Streptococcus pyogenes serotype M2 (strain MGAS10270).